We begin with the raw amino-acid sequence, 183 residues long: ATP-dependent protease subunit HslV (183 aa).

The active site involves Thr-9. Residues Ala-164, Cys-167, and Thr-170 each coordinate Na(+).

Belongs to the peptidase T1B family. HslV subfamily. A double ring-shaped homohexamer of HslV is capped on each side by a ring-shaped HslU homohexamer. The assembly of the HslU/HslV complex is dependent on binding of ATP.

The protein resides in the cytoplasm. The enzyme catalyses ATP-dependent cleavage of peptide bonds with broad specificity.. With respect to regulation, allosterically activated by HslU binding. Protease subunit of a proteasome-like degradation complex believed to be a general protein degrading machinery. This chain is ATP-dependent protease subunit HslV, found in Hydrogenovibrio crunogenus (strain DSM 25203 / XCL-2) (Thiomicrospira crunogena).